The sequence spans 215 residues: Oligoribonuclease (215 aa).

The region spanning 5–170 (LVWIDCEMTG…ADIHESIREL (166 aa)) is the Exonuclease domain. Residue tyrosine 127 is part of the active site. The segment at 196-215 (LDEGKDAPGPSDSASAPPTG) is disordered. Low complexity predominate over residues 202 to 215 (APGPSDSASAPPTG).

This sequence belongs to the oligoribonuclease family.

Its subcellular location is the cytoplasm. Functionally, 3'-to-5' exoribonuclease specific for small oligoribonucleotides. The chain is Oligoribonuclease from Mycobacterium avium (strain 104).